The primary structure comprises 574 residues: Lipase maturation factor 1 (574 aa).

The tract at residues Met1–Asp39 is disordered. Topologically, residues Met1–Phe49 are cytoplasmic. Residues Trp50 to Phe72 form a helical membrane-spanning segment. Topologically, residues Asn73 to Asp127 are lumenal. Residues Leu128–Met151 form a helical membrane-spanning segment. The Cytoplasmic segment spans residues Thr152 to Leu207. The chain crosses the membrane as a helical span at residues Trp208–Ala221. Residues Gly222–Gly292 lie on the Lumenal side of the membrane. A helical transmembrane segment spans residues Val293 to Ala321. Residues Cys322–Gln367 are Cytoplasmic-facing. The chain crosses the membrane as a helical span at residues Val368–Leu388. Residues Leu389 to Arg574 lie on the Lumenal side of the membrane.

It belongs to the lipase maturation factor family. In terms of assembly, interacts with LPL and SEL1L. As to expression, expressed in all tissues synthesizing lipoprotein lipase (Lpl) and hepatic lipase (Lipc), including adipose tissue, skeletal muscle, heart, and liver. Expressed at higher levels in tissues that express little or no lipase activity such as testis and pancreas suggesting additional functions in these tissues.

It localises to the endoplasmic reticulum membrane. Functionally, involved in the maturation of specific proteins in the endoplasmic reticulum. Required for maturation and transport of active lipoprotein lipase (LPL) through the secretory pathway. Each LMF1 molecule chaperones 50 or more molecules of LPL. The chain is Lipase maturation factor 1 (Lmf1) from Mus musculus (Mouse).